A 460-amino-acid polypeptide reads, in one-letter code: Ammonium transporter 1 member 3 (460 aa).

10 helical membrane passes run 15–37 (AIYLLFSAYLVFVMQLGFAMLCA), 50–72 (LTNVVDAVVGSLSYYLFGFAFAF), 98–117 (FFLYQWAFAIAVAGITSGSI), 124–146 (TAYLVFSFFLTGFVYPVVAHWLW), 166–188 (IDFAGSGVVHLVGGIAGFWGSIV), 209–227 (NATLVVLGTLLLWFGWFGF), 255–277 (AVTTTLAGSTAGIVTLFGRRLLV), 305–327 (PWAAILCGFCAAWVLIGLNILAL), 337–356 (AAQLHGGCGAWGLIFTGLFA), and 377–399 (GLILGGGWGLFGAQIVELLSIVV).

The protein belongs to the ammonia transporter channel (TC 1.A.11.2) family. Leaves.

The protein resides in the membrane. Its function is as follows. Ammonium transporter that may be involved in ammonium transport throughout the plant. This is Ammonium transporter 1 member 3 (AMT1-3) from Solanum lycopersicum (Tomato).